A 295-amino-acid polypeptide reads, in one-letter code: Small ribosomal subunit protein uS2 (295 aa).

The disordered stretch occupies residues 247-295 (TDKGLTSKNVSKLKQTKKFSKTKNIDEETNTEFEQALNDADENKNSDNA).

This sequence belongs to the universal ribosomal protein uS2 family.

The polypeptide is Small ribosomal subunit protein uS2 (Rickettsia conorii (strain ATCC VR-613 / Malish 7)).